The sequence spans 170 residues: ATP synthase subunit b (170 aa).

A helical membrane pass occupies residues 11–31 (AFTFGDAFFTLFAFAILLVLI).

This sequence belongs to the ATPase B chain family. F-type ATPases have 2 components, F(1) - the catalytic core - and F(0) - the membrane proton channel. F(1) has five subunits: alpha(3), beta(3), gamma(1), delta(1), epsilon(1). F(0) has three main subunits: a(1), b(2) and c(10-14). The alpha and beta chains form an alternating ring which encloses part of the gamma chain. F(1) is attached to F(0) by a central stalk formed by the gamma and epsilon chains, while a peripheral stalk is formed by the delta and b chains.

It localises to the cell membrane. F(1)F(0) ATP synthase produces ATP from ADP in the presence of a proton or sodium gradient. F-type ATPases consist of two structural domains, F(1) containing the extramembraneous catalytic core and F(0) containing the membrane proton channel, linked together by a central stalk and a peripheral stalk. During catalysis, ATP synthesis in the catalytic domain of F(1) is coupled via a rotary mechanism of the central stalk subunits to proton translocation. In terms of biological role, component of the F(0) channel, it forms part of the peripheral stalk, linking F(1) to F(0). In Listeria monocytogenes serotype 4b (strain F2365), this protein is ATP synthase subunit b.